The following is an 859-amino-acid chain: Probable helicase A859L (859 aa).

In terms of domain architecture, Helicase ATP-binding spans 178–349 (YQELQRSGRA…KNRDLFGGVA (172 aa)). 191–198 (MACRCGKT) contributes to the ATP binding site. The DEAH box motif lies at 298 to 301 (DECH). The Helicase C-terminal domain occupies 394-553 (QIIMALAYLK…RFYEHLLNPS (160 aa)).

It belongs to the asfivirus helicase A859L family.

The polypeptide is Probable helicase A859L (Ornithodoros (relapsing fever ticks)).